Reading from the N-terminus, the 256-residue chain is MYASKYKRGSSNYQRRGYSRYQGFRRTAIVTRHDGKRRQHQSNKSNEDPKMLVQCIRENQFGPDFVMSHNTAISTFINYPQLGKIEPNRCRSYIKLKRLRFKGTVKIERMHTDVNMDGLSPKIEGVFSIVIVVDRKPHLSPSGCLHTFDELFGARINSHGNLAVMPSLKDRFYIRHLLKRVLSVDKDTTMIDVEGSTLLSNKRYNMWSTFNDFDHDSCNGVYANIAKNALLVYYCWMSDIMSKASTFVSYDLDYVG.

Residues 21 to 42 (YQGFRRTAIVTRHDGKRRQHQS) carry the Bipartite nuclear localization signal motif. A Nuclear localization signal motif is present at residues 81–96 (QLGKIEPNRCRSYIKL). The segment at 150 to 187 (ELFGARINSHGNLAVMPSLKDRFYIRHLLKRVLSVDKD) is interaction with Arabidopsis thaliana NSI protein.

It belongs to the begomovirus nuclear shuttle protein family. In terms of assembly, binds to single-stranded and double-stranded viral DNA. Interacts with the host nuclear shuttle interacting (NSI) protein. This interaction may allow NSP to recruit NSI monomers to the viral genome and thus regulate nuclear export of viral genome by NSP.

The protein resides in the host nucleus. It localises to the host cytoplasm. It is found in the host cell membrane. Functionally, binds to the genomic viral ssDNA, shuttles it into and out of the cell nucleus. Begomoviruses use 2 proteins to transport their DNA from cell to cell. The nuclear shuttle protein (NSP) shuttles it between nucleus and cytoplasm and the movement protein (MP) probably transports the DNA-NSP complex to the cell periphery and facilitates movement across the cell wall. This chain is Nuclear shuttle protein, found in Macroptilium lathyroides (Lima bean).